We begin with the raw amino-acid sequence, 331 residues long: Ketol-acid reductoisomerase (NADP(+)) (331 aa).

Positions 2–182 constitute a KARI N-terminal Rossmann domain; the sequence is ARMYYDEDAN…GGTRGGVLET (181 aa). Residues 25–28, S51, S53, and 83–86 each bind NADP(+); these read YGSQ and DEVQ. Residue H108 is part of the active site. An NADP(+)-binding site is contributed by G134. Residues 183–328 form the KARI C-terminal knotted domain; it reads TFREETETDL…KDLRAMFSWL (146 aa). The Mg(2+) site is built by D191, E195, E227, and E231. S252 contributes to the substrate binding site.

The protein belongs to the ketol-acid reductoisomerase family. Mg(2+) is required as a cofactor.

It catalyses the reaction (2R)-2,3-dihydroxy-3-methylbutanoate + NADP(+) = (2S)-2-acetolactate + NADPH + H(+). The enzyme catalyses (2R,3R)-2,3-dihydroxy-3-methylpentanoate + NADP(+) = (S)-2-ethyl-2-hydroxy-3-oxobutanoate + NADPH + H(+). It functions in the pathway amino-acid biosynthesis; L-isoleucine biosynthesis; L-isoleucine from 2-oxobutanoate: step 2/4. It participates in amino-acid biosynthesis; L-valine biosynthesis; L-valine from pyruvate: step 2/4. Its function is as follows. Involved in the biosynthesis of branched-chain amino acids (BCAA). Catalyzes an alkyl-migration followed by a ketol-acid reduction of (S)-2-acetolactate (S2AL) to yield (R)-2,3-dihydroxy-isovalerate. In the isomerase reaction, S2AL is rearranged via a Mg-dependent methyl migration to produce 3-hydroxy-3-methyl-2-ketobutyrate (HMKB). In the reductase reaction, this 2-ketoacid undergoes a metal-dependent reduction by NADPH to yield (R)-2,3-dihydroxy-isovalerate. This is Ketol-acid reductoisomerase (NADP(+)) from Nostoc sp. (strain PCC 7120 / SAG 25.82 / UTEX 2576).